A 447-amino-acid polypeptide reads, in one-letter code: Elongation factor 1-alpha (447 aa).

Residues 5–230 form the tr-type G domain; sequence KIHISIVVIG…DQINEPKRPS (226 aa). The interval 14–21 is G1; sequence GHVDSGKS. Residue 14-21 coordinates GTP; sequence GHVDSGKS. Lysine 55 carries the N6,N6-dimethyllysine modification. The tract at residues 70–74 is G2; that stretch reads GITID. Residue lysine 79 is modified to N6,N6,N6-trimethyllysine. The G3 stretch occupies residues 91–94; that stretch reads DAPG. GTP contacts are provided by residues 91 to 95 and 153 to 156; these read DAPGH and NKMD. The G4 stretch occupies residues 153 to 156; the sequence is NKMD. Lysine 187 carries the N6,N6,N6-trimethyllysine modification. Residues 194 to 196 are G5; the sequence is SGF. Lysine 261 carries the post-translational modification N6-methyllysine. Glutamate 289 bears the 5-glutamyl glycerylphosphorylethanolamine mark. Lysine 306 carries the post-translational modification N6,N6,N6-trimethyllysine. Glutamate 362 is modified (5-glutamyl glycerylphosphorylethanolamine). Lysine 396 is subject to N6,N6,N6-trimethyllysine.

This sequence belongs to the TRAFAC class translation factor GTPase superfamily. Classic translation factor GTPase family. EF-Tu/EF-1A subfamily.

Its subcellular location is the cytoplasm. This protein promotes the GTP-dependent binding of aminoacyl-tRNA to the A-site of ribosomes during protein biosynthesis. The polypeptide is Elongation factor 1-alpha (Hordeum vulgare (Barley)).